A 77-amino-acid polypeptide reads, in one-letter code: Defensin-like protein 1 (77 aa).

The N-terminal stretch at 1 to 30 is a signal peptide; the sequence is MKLSVRFISAALLLFMVFIATGMGPVTVEA. Disulfide bonds link C33-C77, C44-C64, C50-C71, and C54-C73.

The protein belongs to the DEFL family. In terms of tissue distribution, expressed in the whole plant except roots.

The protein resides in the secreted. Its function is as follows. Confers broad-spectrum resistance to pathogens. The sequence is that of Defensin-like protein 1 (PDF2.3) from Arabidopsis thaliana (Mouse-ear cress).